Consider the following 293-residue polypeptide: Alcohol dehydrogenase 1 (293 aa).

Zn(2+) is bound by residues Cys26, Cys29, Cys32, Cys40, and Cys104. Residues 129 to 134 (GLGAVG), Asp153, Arg158, Thr199, Val222, 222 to 224 (VGV), and Phe249 contribute to the NAD(+) site.

This sequence belongs to the zinc-containing alcohol dehydrogenase family. In terms of assembly, homodimer. Zn(2+) is required as a cofactor.

The protein resides in the cytoplasm. The enzyme catalyses a primary alcohol + NAD(+) = an aldehyde + NADH + H(+). It carries out the reaction a secondary alcohol + NAD(+) = a ketone + NADH + H(+). The polypeptide is Alcohol dehydrogenase 1 (ADH1) (Zea luxurians (Guatemalan teosinte)).